The primary structure comprises 25 residues: Xenoposin precursor fragment BM1 (25 aa).

As to expression, expressed by the skin glands.

Its subcellular location is the secreted. In terms of biological role, antimicrobial peptide. The protein is Xenoposin precursor fragment BM1 of Xenopus boumbaensis (Mawa clawed frog).